Reading from the N-terminus, the 59-residue chain is MHFPLPWQLILILLVILVIFGASKLPEVGKGLGEGIRNFKKALSGEEEEKGKEVKKEGE.

The chain crosses the membrane as a helical span at residues 3–23 (FPLPWQLILILLVILVIFGAS).

This sequence belongs to the TatA/E family. As to quaternary structure, forms a complex with TatC.

The protein resides in the cell inner membrane. Its function is as follows. Part of the twin-arginine translocation (Tat) system that transports large folded proteins containing a characteristic twin-arginine motif in their signal peptide across membranes. TatA could form the protein-conducting channel of the Tat system. This chain is Sec-independent protein translocase protein TatA 1, found in Aquifex aeolicus (strain VF5).